The sequence spans 270 residues: Surfeit locus protein 4 homolog (270 aa).

6 helical membrane passes run 65–85 (FLAT…CGMV), 93–113 (IAVG…SILW), 115–135 (FQFL…LAEA), 178–198 (LSVW…LVVL), 206–226 (ALIL…WWTI), and 243–263 (TLSV…GVSM). A Di-lysine motif motif is present at residues 267–270 (KKKW).

This sequence belongs to the SURF4 family.

It is found in the endoplasmic reticulum membrane. Its function is as follows. Endoplasmic reticulum cargo receptor that mediates the export of lipoproteins by recruiting cargos into COPII vesicles to facilitate their secretion. The polypeptide is Surfeit locus protein 4 homolog (Drosophila melanogaster (Fruit fly)).